The chain runs to 385 residues: Urotensin-2 receptor (385 aa).

At 1–53 (MALSLESTSFPMLAVSRSTASELPGGFNVSHNSSWTGPTDPSSLQDLVATGVI) the chain is on the extracellular side. Residues Asn28 and Asn32 are each glycosylated (N-linked (GlcNAc...) asparagine). The chain crosses the membrane as a helical span at residues 54–76 (GAVLSTMGVVGVVGNVYTLVVMC). Topologically, residues 77 to 86 (RFLRASASMY) are cytoplasmic. Residues 87–112 (VYVVNLALADLLYLLSIPFIVATYVT) form a helical membrane-spanning segment. Residues 113–123 (KDWHFGDVGCR) are Extracellular-facing. A disulfide bond links Cys122 and Cys198. Residues 124–145 (VLFSLDFLTMHASIFTLTIMSS) form a helical membrane-spanning segment. At 146–166 (ERYAAVLRPLDTVQRSKGYRK) the chain is on the cytoplasmic side. Residues 167-185 (LLALGTWLLALLLTLPMML) form a helical membrane-spanning segment. The Extracellular portion of the chain corresponds to 186 to 208 (AIRLVRRGSKSLCLPAWGPRAHR). Residues 209–231 (TYLTLLFGTSIVGPGLVIGLLYI) traverse the membrane as a helical segment. The Cytoplasmic portion of the chain corresponds to 232 to 257 (RLARAYWLSQQASFKQTRRLPNPRVL). Residues 258–283 (YLILGIVLLFWACFLPFWLWQLLAQY) form a helical membrane-spanning segment. Topologically, residues 284–298 (HQAMPLTPETARIIN) are extracellular. Residues 299 to 320 (YLTACLTYGNSCINPFLYTLLT) traverse the membrane as a helical segment. At 321 to 385 (KNYREYLRGR…SPVPPNGAFV (65 aa)) the chain is on the cytoplasmic side.

Belongs to the G-protein coupled receptor 1 family.

Its subcellular location is the cell membrane. High affinity receptor for urotensin-2 and urotensin-2B. The activity of this receptor is mediated by a G-protein that activate a phosphatidylinositol-calcium second messenger system. In Mus musculus (Mouse), this protein is Urotensin-2 receptor (Uts2r).